The following is a 271-amino-acid chain: ATP synthase subunit a (271 aa).

5 helical membrane-spanning segments follow: residues 40-60 (TINI…LVLF), 100-120 (LIAP…LMDL), 146-166 (DVNV…FYSI), 220-240 (LIFI…LNVP), and 242-262 (AIFH…LTIV).

The protein belongs to the ATPase A chain family. F-type ATPases have 2 components, CF(1) - the catalytic core - and CF(0) - the membrane proton channel. CF(1) has five subunits: alpha(3), beta(3), gamma(1), delta(1), epsilon(1). CF(0) has three main subunits: a(1), b(2) and c(9-12). The alpha and beta chains form an alternating ring which encloses part of the gamma chain. CF(1) is attached to CF(0) by a central stalk formed by the gamma and epsilon chains, while a peripheral stalk is formed by the delta and b chains.

The protein localises to the cell inner membrane. In terms of biological role, key component of the proton channel; it plays a direct role in the translocation of protons across the membrane. The protein is ATP synthase subunit a of Shigella dysenteriae serotype 1 (strain Sd197).